The primary structure comprises 1256 residues: Centrosome and spindle pole-associated protein 1 (1256 aa).

Coiled-coil stretches lie at residues 38 to 62 (ADNLDEFIEEQKARLAEDKAELESD) and 114 to 135 (EDYERKKHKLKEELRQDYRRYL). Residues 189–208 (GKEESSEKFRQVEKSTEPKS) show a composition bias toward basic and acidic residues. 2 disordered regions span residues 189–244 (GKEE…LTPS) and 381–403 (AENKSAPDNETSKSANQDTCSPF). The span at 222 to 232 (LTSQIQTSCEN) shows a compositional bias: polar residues. The residue at position 244 (Ser-244) is a Phosphoserine. Positions 244–270 (SEAYEELLNQRRLEEDRYRQLDDEIEL) form a coiled coil. Residues 417–449 (QRRKEKYRLELLEQMAEQQRNKRREKDLELRVA) adopt a coiled-coil conformation. Ser-459 and Ser-527 each carry phosphoserine. The stretch at 625–669 (SKQSLQSYQEALQQQIREREERRKKEREEKEEYEAKLEAEMRTYN) forms a coiled coil. Disordered stretches follow at residues 735-757 (ANKSSGHMQTQSSPFARGNVFGE) and 813-853 (EYEE…KKEE). Residues 736–748 (NKSSGHMQTQSSP) show a composition bias toward polar residues. Phosphoserine is present on residues Ser-901 and Ser-920. The disordered stretch occupies residues 913–932 (SSMSRAQSPPVPARKNQLRA). Positions 925–964 (ARKNQLRAEEEKKNVIMELSEMRKQLRSEERRLQERLLHM) form a coiled coil. Ser-966 carries the phosphoserine modification. Disordered regions lie at residues 1114–1147 (EDDVLPPPSQLPSARERRRNKWKGLDIDSSRPNV) and 1232–1256 (LNQEQQQIPGKPGTFTWQGLSTAHG). The segment covering 1246–1256 (FTWQGLSTAHG) has biased composition (polar residues).

As to quaternary structure, interacts with PLEKHG6. Interacts with ARMC9, TOGARAM1, CCDC66, CEP104 and CEP290. Post-translationally, phosphorylated. Phosphorylation increases in colcemide-treated cells. Expressed in adult and fetal brain with enrichment in the cerebellum. Detected in testis.

The protein localises to the cytoplasm. It localises to the cytoskeleton. The protein resides in the microtubule organizing center. It is found in the centrosome. Its subcellular location is the spindle. The protein localises to the spindle pole. It localises to the cell projection. The protein resides in the cilium. Functionally, may play a role in cell-cycle-dependent microtubule organization. This Homo sapiens (Human) protein is Centrosome and spindle pole-associated protein 1 (CSPP1).